The chain runs to 611 residues: TANK-binding kinase 1-binding protein 1 (611 aa).

A homodimerization region spans residues 1 to 280 (MESMFEDDIS…QDLASNQSEC (280 aa)). A coiled-coil region spans residues 48 to 162 (YGDIKERLGG…ALVETHLRQI (115 aa)). Ser-184 is modified (phosphoserine). The stretch at 218–277 (TSVSVSELERRRLEEALEAAQGEARGAQLREEQLQAECERLQGELKQLQETRAQDLASNQ) forms a coiled coil. Residues 281–330 (DMAWVKRVGDDQVNLALAYTELTEELGRLRELSSLQGRILRTLLQEQARN) form an interaction with TBK1 and IKBKE region. The segment at 328–437 (ARNAGQRHSP…PPPPPGERTL (110 aa)) is disordered. A compositionally biased stretch (pro residues) spans 346 to 361 (PACPSPSPPARPPPCA). The span at 362-372 (PCQSPAAQRRS) shows a compositional bias: low complexity. Phosphoserine is present on residues Ser-365, Ser-372, Ser-379, Ser-385, Ser-400, and Ser-415. Positions 389 to 406 (PSCPSPVPQRRSPVPPSC) are enriched in pro residues. Residues 416-433 (PVPPSCPAPQPRPPPPPG) are compositionally biased toward pro residues. Ser-500 and Ser-530 each carry phosphoserine. The segment at 579-605 (IRSCPLCQLGFPVGYPDDALIKHIDSH) adopts a UBZ1-type zinc-finger fold. Zn(2+)-binding residues include Cys-582, Cys-585, His-601, and His-605.

As to quaternary structure, homodimer. May form a heterodimer with NAP1. Interacts with TKB1 and IKBKE. Weakly interacts with DDX3X.

Functionally, adapter protein which constitutively binds TBK1 and IKBKE playing a role in antiviral innate immunity. Essential for the efficient induction of IRF-dependent transcription following infection with Sendai virus. This Mus musculus (Mouse) protein is TANK-binding kinase 1-binding protein 1.